The primary structure comprises 183 residues: Peptide deformylase (183 aa).

Cys-110 and His-153 together coordinate Fe cation. Glu-154 is an active-site residue. Residue His-157 participates in Fe cation binding.

It belongs to the polypeptide deformylase family. Fe(2+) is required as a cofactor.

The catalysed reaction is N-terminal N-formyl-L-methionyl-[peptide] + H2O = N-terminal L-methionyl-[peptide] + formate. Its function is as follows. Removes the formyl group from the N-terminal Met of newly synthesized proteins. Requires at least a dipeptide for an efficient rate of reaction. N-terminal L-methionine is a prerequisite for activity but the enzyme has broad specificity at other positions. The sequence is that of Peptide deformylase from Listeria monocytogenes serotype 4b (strain CLIP80459).